A 279-amino-acid chain; its full sequence is Replication protein A 32 kDa subunit A (279 aa).

Positions 1–39 are disordered; sequence MMSFSQPDAFSPSQFTSSQNAAADSTTPSKSRGASSTMP. The OB DNA-binding region spans 71–145; it reads VRLVGLVSGK…RATAFAIRPV (75 aa). The segment at 181–210 is disordered; it reads GSSSSNGFSEMTTPTSVKSNPAPVLSVTNG. Residues 190-199 show a composition bias toward polar residues; that stretch reads EMTTPTSVKS.

It belongs to the replication factor A protein 2 family. As to quaternary structure, heterotrimer of RPA1, RPA2 and RPA3 (canonical replication protein A complex). Interacts with RPA1A, RPA1B and RPA3. Post-translationally, phosphorylated in a cell-cycle-dependent manner (from the S phase until mitosis). In response to DNA damage, recruited to DNA-repair nuclear foci, as a hypophosphorylated form. In terms of tissue distribution, expressed in root tips, roots, shoot apical meristem (SAM), young leaves, flag leaves and ears, and at lower levels in mature leaves.

The protein localises to the nucleus. In terms of biological role, component of the replication protein A complex (RPA) required for DNA recombination, repair and replication. The activity of RPA is mediated by single-stranded DNA binding and protein interactions. This Oryza sativa subsp. japonica (Rice) protein is Replication protein A 32 kDa subunit A (RPA2A).